We begin with the raw amino-acid sequence, 206 residues long: Large ribosomal subunit protein uL4 (206 aa).

A compositionally biased stretch (polar residues) spans arginine 42 to serine 54. The disordered stretch occupies residues arginine 42–arginine 94. The span at phenylalanine 64–serine 76 shows a compositional bias: basic residues.

This sequence belongs to the universal ribosomal protein uL4 family. As to quaternary structure, part of the 50S ribosomal subunit.

Its function is as follows. One of the primary rRNA binding proteins, this protein initially binds near the 5'-end of the 23S rRNA. It is important during the early stages of 50S assembly. It makes multiple contacts with different domains of the 23S rRNA in the assembled 50S subunit and ribosome. Forms part of the polypeptide exit tunnel. The protein is Large ribosomal subunit protein uL4 of Bartonella tribocorum (strain CIP 105476 / IBS 506).